The sequence spans 238 residues: Adapter protein MecA (238 aa).

A compositionally biased stretch (basic and acidic residues) spans 120-136; the sequence is QQQKDNKQNQDQNERNR. The disordered stretch occupies residues 120-139; the sequence is QQQKDNKQNQDQNERNRQNT.

It belongs to the MecA family. Homodimer.

Its function is as follows. Enables the recognition and targeting of unfolded and aggregated proteins to the ClpC protease or to other proteins involved in proteolysis. The sequence is that of Adapter protein MecA from Staphylococcus saprophyticus subsp. saprophyticus (strain ATCC 15305 / DSM 20229 / NCIMB 8711 / NCTC 7292 / S-41).